We begin with the raw amino-acid sequence, 864 residues long: Protein 4.1 (864 aa).

Composition is skewed to polar residues over residues 1–16 (MTTEKSLVTEAENSQH) and 27–41 (NSGQQEPQQEESCQT). Disordered regions lie at residues 1-122 (MTTE…GTSL), 136-170 (EPELKTDPSLDLHSLSSAETQPAQEELREDPDFEI), and 182-202 (IEVKEESPQSKAETELKASQK). S14 bears the Phosphoserine mark. T60 carries the post-translational modification Phosphothreonine; by CDK1. A compositionally biased stretch (basic and acidic residues) spans 61-75 (PTHEDLTKNKERTSE). The segment covering 76–87 (SRGLSRLFSSFL) has biased composition (low complexity). A phosphoserine mark is found at S84, S85, S95, S104, S121, S149, S151, S152, S188, and S191. Positions 101–117 (EVESDKEKGEGGQKEIE) are enriched in basic and acidic residues. The segment covering 149–158 (SLSSAETQPA) has biased composition (polar residues). Basic and acidic residues predominate over residues 182 to 199 (IEVKEESPQSKAETELKA). The region spanning 210–491 (MHCKVSLLDD…EHHTFFRLTS (282 aa)) is the FERM domain. Y222 carries the phosphotyrosine modification. T378 carries the post-translational modification Phosphothreonine. The interval 494 to 614 (TIPKSKFLAL…QAEPEPTEAW (121 aa)) is hydrophilic. Disordered regions lie at residues 518–572 (RQAS…VAEG) and 586–611 (KAQKETVKAEVKKEDEPPEQAEPEPT). S521, S540, S542, and S555 each carry phosphoserine. A compositionally biased stretch (basic and acidic residues) spans 587 to 600 (AQKETVKAEVKKED). Acidic residues predominate over residues 601–610 (EPPEQAEPEP). A spectrin--actin-binding region spans residues 615 to 713 (KVEKTHIEVT…WDKRLSTHSP (99 aa)). Phosphotyrosine; by EGFR is present on Y660. A phosphoserine mark is found at S664, S674, S684, and S709. S712 bears the Phosphoserine; by CDK1 mark. The interval 714–864 (FRTLNINGQI…VHQETEIADE (151 aa)) is C-terminal (CTD). A phosphothreonine mark is found at T736 and T859.

Binds with a high affinity to glycophorin and with lower affinity to band III protein. Associates with the nuclear mitotic apparatus. Interacts with calmodulin. Interacts with CPAP. Interacts with DLG1. Also found to associate with contractile apparatus and tight junctions. Interacts with NUMA1; this interaction is negatively regulated by CDK1 during metaphase and promotes anaphase-specific localization of NUMA1 in symmetrically dividing cells. Interacts with ATP2B1; regulates small intestinal calcium absorption through regulation of membrane expression of ATP2B1. Phosphorylated at multiple sites by different protein kinases and each phosphorylation event selectively modulates the protein's functions. Post-translationally, phosphorylation on Tyr-660 reduces the ability of 4.1 to promote the assembly of the spectrin/actin/4.1 ternary complex. In terms of processing, O-glycosylated; contains N-acetylglucosamine side chains in the C-terminal domain.

It is found in the cytoplasm. The protein localises to the cytoskeleton. The protein resides in the cell cortex. Its subcellular location is the nucleus. In terms of biological role, protein 4.1 is a major structural element of the erythrocyte membrane skeleton. It plays a key role in regulating membrane physical properties of mechanical stability and deformability by stabilizing spectrin-actin interaction. Recruits DLG1 to membranes. Required for dynein-dynactin complex and NUMA1 recruitment at the mitotic cell cortex during anaphase. This is Protein 4.1 from Homo sapiens (Human).